We begin with the raw amino-acid sequence, 406 residues long: Secretion apparatus protein BsaZ (406 aa).

Transmembrane regions (helical) follow at residues 28-48 (IVALIVIATGALAAPALVDLT), 80-100 (IAAPFVLLCAAAGALPSLVQS), 137-157 (ALLYVGVFALTVRVFAGLYHA), and 175-195 (IVLTVRLVLLFLLCALPVLIL). The tract at residues 341–406 (AANRGGPPPE…APARTGDQNA (66 aa)) is disordered. Positions 370–399 (DACADNAFPDDAPPGAAAPNAGSPDGGAPA) are enriched in low complexity.

Belongs to the type III secretion exporter family.

The protein localises to the cell membrane. Functionally, part of the bsa type III secretion system, is involved in the intracellular replication of invading bacteria inside the host cell. Probably necessary for the lysis of the vacuole membrane and escape into the host cell cytoplasm. This chain is Secretion apparatus protein BsaZ (bsaZ), found in Burkholderia pseudomallei (strain 668).